Consider the following 381-residue polypeptide: Erythronate-4-phosphate dehydrogenase (381 aa).

The substrate site is built by S45 and T66. NAD(+) contacts are provided by residues D146, T174, 205–207 (ASR), and D231. R207 is an active-site residue. E236 is a catalytic residue. H253 functions as the Proton donor in the catalytic mechanism. G256 contributes to the NAD(+) binding site. Y257 contributes to the substrate binding site.

It belongs to the D-isomer specific 2-hydroxyacid dehydrogenase family. PdxB subfamily. As to quaternary structure, homodimer.

It localises to the cytoplasm. The enzyme catalyses 4-phospho-D-erythronate + NAD(+) = (R)-3-hydroxy-2-oxo-4-phosphooxybutanoate + NADH + H(+). It participates in cofactor biosynthesis; pyridoxine 5'-phosphate biosynthesis; pyridoxine 5'-phosphate from D-erythrose 4-phosphate: step 2/5. Catalyzes the oxidation of erythronate-4-phosphate to 3-hydroxy-2-oxo-4-phosphonooxybutanoate. This chain is Erythronate-4-phosphate dehydrogenase, found in Stutzerimonas stutzeri (strain A1501) (Pseudomonas stutzeri).